The chain runs to 626 residues: ATP-dependent zinc metalloprotease FtsH 3 (626 aa).

Topologically, residues 1–7 (MNKLFRS) are cytoplasmic. The chain crosses the membrane as a helical span at residues 8–28 (LAFYMLILVISVAIAVQLGGT). Residues 29-103 (SQQTTQLVYS…LDFRQDNTSG (75 aa)) are Extracellular-facing. Residues 104–124 (IWAMLLQTLVPVVLVLLAFFF) traverse the membrane as a helical segment. The Cytoplasmic segment spans residues 125–626 (IMQQTQGSGN…GGTSQVAPAF (502 aa)). 197–204 (GPPGTGKT) contacts ATP. His-420 contributes to the Zn(2+) binding site. Glu-421 is an active-site residue. Zn(2+) is bound by residues His-424 and Asp-496. The segment at 602–626 (PPRPKPEPLKPRMVGGGTSQVAPAF) is disordered.

It in the central section; belongs to the AAA ATPase family. The protein in the C-terminal section; belongs to the peptidase M41 family. Homohexamer. Requires Zn(2+) as cofactor.

The protein localises to the cell membrane. In terms of biological role, acts as a processive, ATP-dependent zinc metallopeptidase for both cytoplasmic and membrane proteins. Plays a role in the quality control of integral membrane proteins. The sequence is that of ATP-dependent zinc metalloprotease FtsH 3 from Symbiobacterium thermophilum (strain DSM 24528 / JCM 14929 / IAM 14863 / T).